The primary structure comprises 525 residues: Ribosomal protein S6 kinase beta-1 (525 aa).

A TOS motif motif is present at residues 28-32 (FDIDL). Residues 28–54 (FDIDLDQPEDAGSEDELEEGGQLNESM) form a disordered region. Positions 30-46 (IDLDQPEDAGSEDELEE) are enriched in acidic residues. Positions 91–352 (FELLRVLGKG…AGEVQAHPFF (262 aa)) constitute a Protein kinase domain. Residues 97–105 (LGKGGYGKV) and Lys123 contribute to the ATP site. Asp218 acts as the Proton acceptor in catalysis. The residue at position 252 (Thr252) is a Phosphothreonine; by PDPK1. In terms of domain architecture, AGC-kinase C-terminal spans 353 to 423 (RHINWEELLA…VAPSVLESVK (71 aa)). The interval 380–399 (SQFDSKFTRQTPVDSPDDST) is disordered. The span at 381–399 (QFDSKFTRQTPVDSPDDST) shows a compositional bias: polar residues. Ser394 carries the phosphoserine modification. Thr412 bears the Phosphothreonine; by MTOR, NEK6 and NEK7 mark. An autoinhibitory domain region spans residues 424 to 525 (EKFSFEPKIR…KRPEHLRMNL (102 aa)). 2 positions are modified to phosphoserine: Ser434 and Ser441. Thr444 bears the Phosphothreonine mark. A phosphoserine mark is found at Ser447 and Ser452. A disordered region spans residues 486–509 (VTTSGEASAPLPIRQPNSGPYKKQ). Lys516 carries the N6-acetyllysine modification.

It belongs to the protein kinase superfamily. AGC Ser/Thr protein kinase family. S6 kinase subfamily. Interacts with PPP1R9A/neurabin-1. Interacts with RPTOR. Interacts with IRS1. Interacts with EIF3B and EIF3C. Interacts with POLDIP3. Interacts with TRAF4. Interacts (via N-terminus) with IER5. Dephosphorylation by PPP1CC at Thr-412 in mitochondrion. Phosphorylation at Thr-412 is regulated by mTORC1. The phosphorylation at this site is maintained by an agonist-dependent autophosphorylation mechanism. Activated by phosphorylation at Thr-252 by PDPK1. As to expression, brain.

It localises to the cytoplasm. The protein localises to the synapse. It is found in the synaptosome. The protein resides in the mitochondrion outer membrane. Its subcellular location is the mitochondrion. It carries out the reaction L-seryl-[protein] + ATP = O-phospho-L-seryl-[protein] + ADP + H(+). It catalyses the reaction L-threonyl-[protein] + ATP = O-phospho-L-threonyl-[protein] + ADP + H(+). Its activity is regulated as follows. Activation requires multiple phosphorylation events on serine/threonine residues. Activation appears to be first mediated by phosphorylation of multiple sites in the autoinhibitory domain, which facilitates phosphorylation at Thr-412, disrupting the autoinhibitory mechanism and allowing phosphorylation of Thr-252 by PDPK1. The active conformation of the kinase is believed to be stabilized by a mechanism involving three conserved phosphorylation sites located in the kinase domain activation loop (Thr-252) and in the AGC-kinase C-terminal domain (Ser-394 in the middle of the tail/linker region and Thr-412 within a hydrophobic motif at its end). Activated by mTORC1; isoform Alpha I and isoform Alpha II are sensitive to rapamycin, which inhibits activating phosphorylation at Thr-412. Activated by PDPK1. Its function is as follows. Serine/threonine-protein kinase that acts downstream of mTOR signaling in response to growth factors and nutrients to promote cell proliferation, cell growth and cell cycle progression. Regulates protein synthesis through phosphorylation of EIF4B, RPS6 and EEF2K, and contributes to cell survival by repressing the pro-apoptotic function of BAD. Under conditions of nutrient depletion, the inactive form associates with the EIF3 translation initiation complex. Upon mitogenic stimulation, phosphorylation by the mechanistic target of rapamycin complex 1 (mTORC1) leads to dissociation from the EIF3 complex and activation. The active form then phosphorylates and activates several substrates in the pre-initiation complex, including the EIF2B complex and the cap-binding complex component EIF4B. Also controls translation initiation by phosphorylating a negative regulator of EIF4A, PDCD4, targeting it for ubiquitination and subsequent proteolysis. Promotes initiation of the pioneer round of protein synthesis by phosphorylating POLDIP3/SKAR. In response to IGF1, activates translation elongation by phosphorylating EEF2 kinase (EEF2K), which leads to its inhibition and thus activation of EEF2. Also plays a role in feedback regulation of mTORC2 by mTORC1 by phosphorylating MAPKAP1/SIN1, MTOR and RICTOR, resulting in the inhibition of mTORC2 and AKT1 signaling. Also involved in feedback regulation of mTORC1 and mTORC2 by phosphorylating DEPTOR. Mediates cell survival by phosphorylating the pro-apoptotic protein BAD and suppressing its pro-apoptotic function. Phosphorylates mitochondrial URI1 leading to dissociation of a URI1-PPP1CC complex. The free mitochondrial PPP1CC can then dephosphorylate RPS6KB1 at Thr-412, which is proposed to be a negative feedback mechanism for the RPS6KB1 anti-apoptotic function. Mediates TNF-alpha-induced insulin resistance by phosphorylating IRS1 at multiple serine residues, resulting in accelerated degradation of IRS1. In cells lacking functional TSC1-2 complex, constitutively phosphorylates and inhibits GSK3B. May be involved in cytoskeletal rearrangement through binding to neurabin. Phosphorylates and activates the pyrimidine biosynthesis enzyme CAD, downstream of MTOR. Following activation by mTORC1, phosphorylates EPRS and thereby plays a key role in fatty acid uptake by adipocytes and also most probably in interferon-gamma-induced translation inhibition. The protein is Ribosomal protein S6 kinase beta-1 (Rps6kb1) of Rattus norvegicus (Rat).